A 56-amino-acid chain; its full sequence is Photosystem II assembly protein Psb34 (56 aa).

The Cytoplasmic portion of the chain corresponds to 1–33 (MRYTTDEGGRLNNFAIEPKVYQAQPWTPQQKVR). Residues 34-54 (AALLVGGGLLLVAGLVAIAVG) form a helical membrane-spanning segment. Topologically, residues 55 to 56 (VS) are extracellular.

In terms of assembly, part of photosystem II (PSII) assembly intermediate complex PSII-I; crystallized from a strain without psbJ, it forms monomeric PSII before addition of the oxygen evolving complex. PSII-I includes 3 assembly factors not found in mature PSII (Psb27, Psb28 and Psb34). The N-terminus of Psb34 (this protein) binds to CP47 (psbB) in close proximity to PsbH on the cytoplasmic face of PSII.

Its subcellular location is the cellular thylakoid membrane. Functionally, involved in photosystem II (PSII) assembly and/or repair, probably in conversion of late PSII assembly intermediates into mature dimeric PSII. This Thermosynechococcus vestitus (strain NIES-2133 / IAM M-273 / BP-1) protein is Photosystem II assembly protein Psb34.